We begin with the raw amino-acid sequence, 508 residues long: Drug efflux pump JefA (508 aa).

The next 14 helical transmembrane spans lie at 9-29 (VLAT…VNVA), 46-66 (WAVA…ALLG), 75-95 (FVFG…PVSL), 104-124 (IQGL…SHSF), 136-156 (NWMA…GLMV), 163-183 (SVFL…LVGV), 194-214 (LDWV…YTII), 222-242 (QSAG…WLFV), 265-285 (SVLI…MVIT), 297-317 (LHAG…SLLA), 328-348 (LPVL…AISM), 354-374 (VALV…TPLL), 399-419 (LGGI…LGAA), and 479-499 (GIKL…VLGW).

This sequence belongs to the major facilitator superfamily.

It is found in the cell inner membrane. Its function is as follows. Involved in resistance to ethambutol and isoniazid. The polypeptide is Drug efflux pump JefA (Mycobacterium tuberculosis (strain CDC 1551 / Oshkosh)).